A 472-amino-acid polypeptide reads, in one-letter code: NADH-quinone oxidoreductase subunit N 2 (472 aa).

The next 13 helical transmembrane spans lie at 3-23 (WMSF…LLLS), 34-54 (HVAA…SVGA), 67-87 (LFSQ…VTLC), 106-126 (FVCT…VVFI), 156-176 (FLVG…LYGA), 198-218 (VVIG…VFPF), 233-253 (VSAY…VRVI), 263-283 (LVHV…LAAI), 291-311 (LLAY…LSMN), 317-337 (AAVF…LVLV), 360-380 (ILAL…PTVG), 398-418 (TLVL…LLVI), and 441-461 (LLSG…NQII).

It belongs to the complex I subunit 2 family. As to quaternary structure, NDH-1 is composed of 14 different subunits. Subunits NuoA, H, J, K, L, M, N constitute the membrane sector of the complex.

Its subcellular location is the cell inner membrane. The enzyme catalyses a quinone + NADH + 5 H(+)(in) = a quinol + NAD(+) + 4 H(+)(out). Functionally, NDH-1 shuttles electrons from NADH, via FMN and iron-sulfur (Fe-S) centers, to quinones in the respiratory chain. The immediate electron acceptor for the enzyme in this species is believed to be ubiquinone. Couples the redox reaction to proton translocation (for every two electrons transferred, four hydrogen ions are translocated across the cytoplasmic membrane), and thus conserves the redox energy in a proton gradient. The polypeptide is NADH-quinone oxidoreductase subunit N 2 (Syntrophobacter fumaroxidans (strain DSM 10017 / MPOB)).